Consider the following 278-residue polypeptide: MSQQENKKMINVGVIGAGGRMGRMLIEAIQDNPQTALNAAIERQGSSLVGADAGEVAAIGRLEVQIVDDLKAVINDIDVLIDFSLPAATEQNMQVCAKHNVAMVIGTTGFNEQQEQVLAKASEQVAIVYAGNYSTGVNLSLKLLGMAAKAFGTDADVEIIEAHHKHKIDAPSGTAYMMAEAVAEARGQNLKEVVVYGREGQTGAREAGTIGIHAIRGGEIIGDHTVMFIADGEVVEITHRARARMTFAAGAVRAATWIVQQPVGQYNMQDVLGLNDYI.

NAD(+) is bound by residues Gly16 to Met21 and Glu42. Residue Arg43 coordinates NADP(+). NAD(+)-binding positions include Gly106 to Thr108 and Ala130 to Tyr133. Residue His163 is the Proton donor/acceptor of the active site. His164 is a (S)-2,3,4,5-tetrahydrodipicolinate binding site. Lys167 acts as the Proton donor in catalysis. Gly173–Thr174 is a (S)-2,3,4,5-tetrahydrodipicolinate binding site.

The protein belongs to the DapB family.

The protein localises to the cytoplasm. The enzyme catalyses (S)-2,3,4,5-tetrahydrodipicolinate + NAD(+) + H2O = (2S,4S)-4-hydroxy-2,3,4,5-tetrahydrodipicolinate + NADH + H(+). The catalysed reaction is (S)-2,3,4,5-tetrahydrodipicolinate + NADP(+) + H2O = (2S,4S)-4-hydroxy-2,3,4,5-tetrahydrodipicolinate + NADPH + H(+). The protein operates within amino-acid biosynthesis; L-lysine biosynthesis via DAP pathway; (S)-tetrahydrodipicolinate from L-aspartate: step 4/4. Functionally, catalyzes the conversion of 4-hydroxy-tetrahydrodipicolinate (HTPA) to tetrahydrodipicolinate. This Psychrobacter arcticus (strain DSM 17307 / VKM B-2377 / 273-4) protein is 4-hydroxy-tetrahydrodipicolinate reductase.